Here is a 139-residue protein sequence, read N- to C-terminus: Putative truncated protein trichome birefringence-like 46 (139 aa).

The protein belongs to the PC-esterase family. TBL subfamily.

This chain is Putative truncated protein trichome birefringence-like 46 (TBL46), found in Arabidopsis thaliana (Mouse-ear cress).